A 318-amino-acid chain; its full sequence is Cytochrome f (318 aa).

A signal peptide spans 1–32 (MQNKNNYNWLKEWVIRSFLLLTLLTWPSVSNA). The heme site is built by Tyr33, Cys53, Cys56, and His57. The helical transmembrane segment at 284–304 (IQGLLLFFASVVLAQIFLVLK) threads the bilayer.

It belongs to the cytochrome f family. The 4 large subunits of the cytochrome b6-f complex are cytochrome b6, subunit IV (17 kDa polypeptide, petD), cytochrome f and the Rieske protein, while the 4 small subunits are PetG, PetL, PetM and PetN. The complex functions as a dimer. The cofactor is heme.

It is found in the plastid. The protein resides in the chloroplast thylakoid membrane. Its function is as follows. Component of the cytochrome b6-f complex, which mediates electron transfer between photosystem II (PSII) and photosystem I (PSI), cyclic electron flow around PSI, and state transitions. In Angiopteris evecta (Mule's foot fern), this protein is Cytochrome f.